The sequence spans 261 residues: Putative hydro-lyase SAR11_0660 (261 aa).

It belongs to the D-glutamate cyclase family.

This chain is Putative hydro-lyase SAR11_0660, found in Pelagibacter ubique (strain HTCC1062).